The chain runs to 315 residues: Taste receptor type 2 member 3 (315 aa).

Over 1 to 5 (MGLTE) the chain is Extracellular. A helical transmembrane segment spans residues 6 to 26 (GVFLILSGTQFTLGILVNCFI). At 27-41 (ELVNGSSWFKTKRMS) the chain is on the cytoplasmic side. A helical transmembrane segment spans residues 42–62 (LSDFIITTLALLRIILLCIIL). At 63-93 (TDSFLIEFSPNTHDSGIIMQIIDVSWTFTNH) the chain is on the extracellular side. Residues 94-114 (LSIWLATCLGVLYCLKIASFS) form a helical membrane-spanning segment. At 115–127 (HPTFLWLKWRVSR) the chain is on the cytoplasmic side. The helical transmembrane segment at 128–148 (VMVWMLLGALLLSCGSTASLI) threads the bilayer. Topologically, residues 149-185 (NEFKLYSVFRGIEATRNVTEHFRKKRSEYYLIHVLGT) are extracellular. N-linked (GlcNAc...) asparagine glycosylation occurs at Asn-165. The helical transmembrane segment at 186–206 (LWYLPPLIVSLASYSLLIFSL) threads the bilayer. Residues 207–233 (GRHTRQMLQNGTSSRDPTTEAHKRAIR) are Cytoplasmic-facing. A helical transmembrane segment spans residues 234 to 254 (IILSFFFLFLLYFLAFLIASF). Over 255–265 (GNFLPKTKMAK) the chain is Extracellular. The helical transmembrane segment at 266-286 (MIGEVMTMFYPAGHSFILILG) threads the bilayer. At 287 to 315 (NSKLKQTFVVMLRCESGHLKPGSKGPIFS) the chain is on the cytoplasmic side.

The protein belongs to the G-protein coupled receptor T2R family.

The protein resides in the membrane. Its function is as follows. Gustducin-coupled receptor implicated in the perception of bitter compounds in the oral cavity and the gastrointestinal tract. Signals through PLCB2 and the calcium-regulated cation channel TRPM5. This chain is Taste receptor type 2 member 3 (TAS2R3), found in Gorilla gorilla gorilla (Western lowland gorilla).